A 528-amino-acid polypeptide reads, in one-letter code: Phosphoenolpyruvate carboxykinase (ATP) (528 aa).

The substrate site is built by arginine 56, tyrosine 192, and lysine 198. ATP contacts are provided by residues lysine 198, histidine 217, and 233-241; that span reads GLSGTGKTT. Mn(2+)-binding residues include lysine 198 and histidine 217. Aspartate 254 contributes to the Mn(2+) binding site. The ATP site is built by glutamate 282, arginine 319, and threonine 444. Arginine 319 contacts substrate.

The protein belongs to the phosphoenolpyruvate carboxykinase (ATP) family. Requires Mn(2+) as cofactor.

The protein localises to the cytoplasm. The enzyme catalyses oxaloacetate + ATP = phosphoenolpyruvate + ADP + CO2. Its pathway is carbohydrate biosynthesis; gluconeogenesis. Involved in the gluconeogenesis. Catalyzes the conversion of oxaloacetate (OAA) to phosphoenolpyruvate (PEP) through direct phosphoryl transfer between the nucleoside triphosphate and OAA. The sequence is that of Phosphoenolpyruvate carboxykinase (ATP) from Bacillus mycoides (strain KBAB4) (Bacillus weihenstephanensis).